The primary structure comprises 82 residues: Sulfur carrier protein TusA (82 aa).

The Cysteine persulfide intermediate role is filled by Cys19.

It belongs to the sulfur carrier protein TusA family.

It is found in the cytoplasm. Sulfur carrier protein which probably makes part of a sulfur-relay system. This chain is Sulfur carrier protein TusA, found in Vibrio cholerae serotype O1 (strain ATCC 39541 / Classical Ogawa 395 / O395).